The sequence spans 159 residues: Phosphopantetheine adenylyltransferase (159 aa).

Substrate is bound at residue Thr9. Residues Thr9–Phe10 and His17 contribute to the ATP site. Residues Lys41, Leu73, and Arg87 each contribute to the substrate site. ATP is bound by residues Gly88–Arg90, Glu98, and Tyr123–Thr129.

It belongs to the bacterial CoaD family. In terms of assembly, homohexamer. Mg(2+) serves as cofactor.

It localises to the cytoplasm. The enzyme catalyses (R)-4'-phosphopantetheine + ATP + H(+) = 3'-dephospho-CoA + diphosphate. It functions in the pathway cofactor biosynthesis; coenzyme A biosynthesis; CoA from (R)-pantothenate: step 4/5. Its function is as follows. Reversibly transfers an adenylyl group from ATP to 4'-phosphopantetheine, yielding dephospho-CoA (dPCoA) and pyrophosphate. In Pseudomonas syringae pv. tomato (strain ATCC BAA-871 / DC3000), this protein is Phosphopantetheine adenylyltransferase.